Here is a 568-residue protein sequence, read N- to C-terminus: PCNA-interacting partner (568 aa).

A disordered region spans residues 442–555; it reads QIPTCVHPAP…RNNKAVSKKL (114 aa). Over residues 488–500 the composition is skewed to polar residues; it reads NAWNQTGGKSTQP. Basic and acidic residues predominate over residues 515–527; it reads ANRECTEQGREEN.

It belongs to the PARI family.

Its subcellular location is the cytoplasm. The protein localises to the nucleus. In terms of biological role, required to suppress inappropriate homologous recombination, thereby playing a central role DNA repair and in the maintenance of genomic stability. This chain is PCNA-interacting partner (parpbp), found in Danio rerio (Zebrafish).